Consider the following 1274-residue polypeptide: ABC multidrug transporter E (1274 aa).

Asn-48 carries N-linked (GlcNAc...) asparagine glycosylation. Residues 120–344 enclose the ABC transmembrane type-1 1 domain; sequence FCFRVTGLRV…IASPLIIVSK (225 aa). The next 4 helical transmembrane spans lie at 183–203, 205–225, 280–300, and 321–341; these read LALL…LTLV, SSAL…MTKI, IFGI…SLAF, and VFFS…PLII. Positions 377–629 constitute an ABC transporter 1 domain; sequence IIFRDVRFTY…EGGVYRDLVN (253 aa). 412–419 is an ATP binding site; the sequence is GPSGSGKS. Asn-473 and Asn-580 each carry an N-linked (GlcNAc...) asparagine glycan. Helical transmembrane passes span 697–717 and 737–757; these read VAVL…SWLF and FWAL…STVG. One can recognise an ABC transmembrane type-1 2 domain in the interval 697 to 984; it reads VAVLISTAGA…FFSFASNFAQ (288 aa). The N-linked (GlcNAc...) asparagine glycan is linked to Asn-792. The next 3 membrane-spanning stretches (helical) occupy residues 818-838, 840-860, and 924-944; these read FPLI…SFGW, LSLV…FMRI, and LIFA…FWYG. One can recognise an ABC transporter 2 domain in the interval 1023–1269; that stretch reads VEFHDVSFRY…KGTYWQMVSS (247 aa). Asn-1044 carries an N-linked (GlcNAc...) asparagine glycan. 1057–1064 serves as a coordination point for ATP; that stretch reads GPSGCGKT. Asn-1117 carries an N-linked (GlcNAc...) asparagine glycan.

Belongs to the ABC transporter superfamily. ABCB family. Multidrug resistance exporter (TC 3.A.1.201) subfamily.

The protein localises to the cell membrane. Pleiotropic ABC efflux transporter that may be involved in A.fumigatus adaptation to azoles such as vorizonazole. The sequence is that of ABC multidrug transporter E from Aspergillus fumigatus (strain ATCC MYA-4609 / CBS 101355 / FGSC A1100 / Af293) (Neosartorya fumigata).